Consider the following 628-residue polypeptide: MNKDYDVIVVGAGHAGVEAALASARLGNKTALITLYLDTISMMSCNPSIGGPGKSNLVTEIDVLGGEMGRHIDEFNLQLKDLNTSKGPAARITRGQADKYKYRRKMREKLEKTENISLIQDCVEEILVEDIKDTQNSNYIKKITGIKTRLGIIYNAKVIVLATGTFLKGKIVIGDVSYSAGRQGETSAEKLSDSLRELGIKIERYQTATPPRLDKKTIDFSQLEELKGEEHPRYFSLFTKKEKNNTVPTWLTYTSDKTIEVIKEMMKFSPIVSGMVNTHGPRHCPSIDRKVLNFPDKEKHQIFLEMESENSDEIYVNGLTTAMPAFVQEKILKTIKGLENAKIMRYGYAVEYDYAPASQLYPSLENKKISGLFFAGQINGTSGYEEAAAQGFIAGVNAAKKIKGEKPVIIDRSEAYIGVLIDDLIHKKTPEPYRVLPSRAEYRLTLRYDNAFMRLFDKIKEVGIVDKDKIEFLEKSINDVYMEINNLKNISVSMNEANKFLESLDIEERFVKGVKASEILKIKDVSYDNLKVFLNLNDYEDFVKNQIETMIKYEIFIERENKQIEKFKKLEHMYIPENINYDEIKGISNIARAGLDEVRPLSIGEATRISGVTSNDITLIIAYMNIKL.

11 to 16 contacts FAD; it reads GAGHAG. 280-294 contacts NAD(+); sequence GPRHCPSIDRKVLNF.

Belongs to the MnmG family. Homodimer. Heterotetramer of two MnmE and two MnmG subunits. It depends on FAD as a cofactor.

The protein resides in the cytoplasm. NAD-binding protein involved in the addition of a carboxymethylaminomethyl (cmnm) group at the wobble position (U34) of certain tRNAs, forming tRNA-cmnm(5)s(2)U34. The protein is tRNA uridine 5-carboxymethylaminomethyl modification enzyme MnmG 1 of Fusobacterium nucleatum subsp. nucleatum (strain ATCC 25586 / DSM 15643 / BCRC 10681 / CIP 101130 / JCM 8532 / KCTC 2640 / LMG 13131 / VPI 4355).